Here is a 442-residue protein sequence, read N- to C-terminus: tRNA modification GTPase MnmE (442 aa).

Positions 24, 82, and 120 each coordinate (6S)-5-formyl-5,6,7,8-tetrahydrofolate. In terms of domain architecture, TrmE-type G spans 217-367 (GLHIVITGEP…LISLIKEKAE (151 aa)). GTP contacts are provided by residues 227-232 (NVGKST), 246-252 (SEYAGTT), and 271-274 (DTAG). Positions 231 and 252 each coordinate Mg(2+). Lys442 is a (6S)-5-formyl-5,6,7,8-tetrahydrofolate binding site.

The protein belongs to the TRAFAC class TrmE-Era-EngA-EngB-Septin-like GTPase superfamily. TrmE GTPase family. Homodimer. Heterotetramer of two MnmE and two MnmG subunits. It depends on K(+) as a cofactor.

Its subcellular location is the cytoplasm. Exhibits a very high intrinsic GTPase hydrolysis rate. Involved in the addition of a carboxymethylaminomethyl (cmnm) group at the wobble position (U34) of certain tRNAs, forming tRNA-cmnm(5)s(2)U34. This is tRNA modification GTPase MnmE from Wolbachia sp. subsp. Drosophila simulans (strain wRi).